Reading from the N-terminus, the 792-residue chain is Protein SEY1 homolog 2 (792 aa).

Over 1 to 638 the chain is Cytoplasmic; the sequence is MEQIITGDGA…NIKAQANREQ (638 aa). The 218-residue stretch at 28–245 folds into the GB1/RHD3-type G domain; the sequence is GVDYHTVAII…LKDYLFAEKS (218 aa). A GTP-binding site is contributed by 38–45; that stretch reads GPQSSGKS. Residues 639–659 form a helical membrane-spanning segment; the sequence is IPGWAWLATFLCSSNYIMKLL. Over 660 to 662 the chain is Lumenal; the sequence is ANP. Residues 663-683 traverse the membrane as a helical segment; that stretch reads IFFALAVIIGGIYSILRMLGL. Residues 684–792 lie on the Cytoplasmic side of the membrane; sequence QDVAKKTLLD…LTRTQSLEFM (109 aa). A coiled-coil region spans residues 691–718; sequence LLDKFNSLLKNLTKDENEQEKEGEENEE. The interval 703 to 792 is disordered; that stretch reads TKDENEQEKE…LTRTQSLEFM (90 aa). A compositionally biased stretch (acidic residues) spans 707–723; the sequence is NEQEKEGEENEEPEEDQ. 2 stretches are compositionally biased toward polar residues: residues 739-751 and 764-774; these read SVSQEFSQKSIYK and IPQTSPLGNND.

The protein belongs to the TRAFAC class dynamin-like GTPase superfamily. GB1/RHD3 GTPase family. RHD3 subfamily.

It localises to the endoplasmic reticulum membrane. Its function is as follows. Probable GTP-binding protein that may be involved in cell development. The protein is Protein SEY1 homolog 2 of Trichomonas vaginalis (strain ATCC PRA-98 / G3).